A 100-amino-acid polypeptide reads, in one-letter code: Putative pterin-4-alpha-carbinolamine dehydratase (100 aa).

Belongs to the pterin-4-alpha-carbinolamine dehydratase family.

It carries out the reaction (4aS,6R)-4a-hydroxy-L-erythro-5,6,7,8-tetrahydrobiopterin = (6R)-L-erythro-6,7-dihydrobiopterin + H2O. In Bradyrhizobium diazoefficiens (strain JCM 10833 / BCRC 13528 / IAM 13628 / NBRC 14792 / USDA 110), this protein is Putative pterin-4-alpha-carbinolamine dehydratase.